The sequence spans 504 residues: Maturase K (504 aa).

Belongs to the intron maturase 2 family. MatK subfamily.

The protein localises to the plastid. It localises to the chloroplast. Its function is as follows. Usually encoded in the trnK tRNA gene intron. Probably assists in splicing its own and other chloroplast group II introns. The polypeptide is Maturase K (Berzelia lanuginosa (Buttonbush)).